Reading from the N-terminus, the 347-residue chain is GMP reductase (347 aa).

108–131 provides a ligand contact to NADP(+); that stretch reads ADFEKTKQILDLNPALNFVCIDVA. Residues G181 and G183 each contribute to the K(+) site. C186 serves as the catalytic Thioimidate intermediate. 216–239 contacts NADP(+); that stretch reads IVSDGGCTTPGDVAKAFGGGADFV.

Belongs to the IMPDH/GMPR family. GuaC type 1 subfamily. Homotetramer.

It catalyses the reaction IMP + NH4(+) + NADP(+) = GMP + NADPH + 2 H(+). Its function is as follows. Catalyzes the irreversible NADPH-dependent deamination of GMP to IMP. It functions in the conversion of nucleobase, nucleoside and nucleotide derivatives of G to A nucleotides, and in maintaining the intracellular balance of A and G nucleotides. The polypeptide is GMP reductase (Escherichia coli O127:H6 (strain E2348/69 / EPEC)).